Consider the following 233-residue polypeptide: uncharacterized protein (233 aa).

Residues N58, N77, N93, N102, N110, N120, and N155 are each glycosylated (N-linked (GlcNAc...) asparagine; by host). A compositionally biased stretch (low complexity) spans 102 to 124 (NSSTTTTTNASSSDSSMYNTTRS). Residues 102–132 (NSSTTTTTNASSSDSSMYNTTRSTQRRVTYD) are disordered. Residues 168-188 (FSLLQWVLVAALAFFMYYFLW) traverse the membrane as a helical segment.

Belongs to the ascovirus HvAv ORF58 family.

The protein resides in the membrane. This is an uncharacterized protein from Trichoplusia ni ascovirus 2c (TnAV-2c).